Reading from the N-terminus, the 312-residue chain is tRNA pseudouridine synthase B (312 aa).

The active-site Nucleophile is D46. Y74, Y177, and L198 together coordinate substrate.

Belongs to the pseudouridine synthase TruB family. Type 1 subfamily.

The enzyme catalyses uridine(55) in tRNA = pseudouridine(55) in tRNA. Functionally, responsible for synthesis of pseudouridine from uracil-55 in the psi GC loop of transfer RNAs. This Buchnera aphidicola subsp. Schizaphis graminum (strain Sg) protein is tRNA pseudouridine synthase B.